The sequence spans 572 residues: Squalene monooxygenase (572 aa).

The Cytoplasmic portion of the chain corresponds to 1–19; it reads MWTFLGIATFTYFYKKCGD. The segment at 1-98 is interaction with MARCHF6; the sequence is MWTFLGIATF…EQLESKKCRK (98 aa). An intramembrane segment occupies 20–40; the sequence is VTLANKELLLCVLVFLSLGLV. At 41–572 the chain is on the cytoplasmic side; that stretch reads LSYRCRHRHG…IYSEMKYLVH (532 aa). The segment at 61-72 is required for degradation in response to high membrane cholesterol levels; it reads QFAAFSDILSAL. The tract at residues 116–572 is sufficient for enzyme activity; it reads TSFVTDPEVI…IYSEMKYLVH (457 aa). FAD contacts are provided by residues 131-132, 151-152, arginine 159, arginine 232, valine 248, aspartate 406, and methionine 419; these read VL and ER. The interval 514 to 572 is hydrophobic; mediates interaction with membranes; the sequence is PLVLIRHFFSVAIYATYFCFKSEPWATKPRALFSSGAVLYKACSILFPLIYSEMKYLVH.

It belongs to the squalene monooxygenase family. In terms of assembly, interacts (via N-terminal domain) with MARCHF6. Interacts with SMIM22; this interaction modulates lipid droplet formation. FAD is required as a cofactor. Ubiquitinated by MARCHF6 in response to high cholesterol levels in intracellular membranes, leading to proteasomal degradation. Detected in liver.

It localises to the microsome membrane. It is found in the endoplasmic reticulum membrane. It carries out the reaction squalene + reduced [NADPH--hemoprotein reductase] + O2 = (S)-2,3-epoxysqualene + oxidized [NADPH--hemoprotein reductase] + H2O + H(+). It functions in the pathway terpene metabolism; lanosterol biosynthesis; lanosterol from farnesyl diphosphate: step 2/3. Catalyzes the stereospecific oxidation of squalene to (S)-2,3-epoxysqualene, and is considered to be a rate-limiting enzyme in steroid biosynthesis. The chain is Squalene monooxygenase (Sqle) from Mus musculus (Mouse).